The sequence spans 228 residues: N-acetyltransferase family 8 member 3 (228 aa).

2 helical membrane passes run 36–56 (MLLL…LFLA) and 58–78 (GSWL…WLLA). The 157-residue stretch at 61 to 217 (LLVLLSTLTL…RNSPMICLKY (157 aa)) folds into the N-acetyltransferase domain.

This sequence belongs to the camello family.

It localises to the nucleus membrane. Its subcellular location is the cytoplasm. The protein localises to the perinuclear region. The catalysed reaction is L-lysyl-[protein] + acetyl-CoA = N(6)-acetyl-L-lysyl-[protein] + CoA + H(+). Functionally, has histone acetyltransferase activity in vitro, with specificity for histone H4. The polypeptide is N-acetyltransferase family 8 member 3 (Rattus norvegicus (Rat)).